Reading from the N-terminus, the 124-residue chain is Small ribosomal subunit protein bS6 (124 aa).

The segment at E96–A124 is disordered. The segment covering A114 to A124 has biased composition (low complexity).

Belongs to the bacterial ribosomal protein bS6 family.

Functionally, binds together with bS18 to 16S ribosomal RNA. This Burkholderia mallei (strain ATCC 23344) protein is Small ribosomal subunit protein bS6.